The primary structure comprises 75 residues: Sperm-specific protein PL-I (75 aa).

In terms of domain architecture, H15 spans 2 to 74; that stretch reads GSSGMMSMVA…GSAGWVLVPK (73 aa).

This sequence belongs to the histone H1/H5 family. Sperm.

The protein localises to the nucleus. Its subcellular location is the chromosome. Linker histones are implicated in chromatin remodeling and/or transcriptional regulation during spermiogenesis, the process of spermatid maturation into spermatozoa. This is Sperm-specific protein PL-I from Spisula solidissima (Atlantic surf-clam).